The following is a 217-amino-acid chain: Photosynthetic NDH subunit of lumenal location 4, chloroplastic (217 aa).

The transit peptide at 1 to 34 (MAISTLTLTQSLYTRSFRPTIFFSSSSSSSFSCL) directs the protein to the chloroplast. 2 disulfides stabilise this stretch: C87–C99 and C188–C193. Positions 112–211 (GVLVNIHYTA…LYDINFVEIY (100 aa)) constitute a PPIase FKBP-type domain.

This sequence belongs to the FKBP-type PPIase family. As to quaternary structure, part of the chloroplast NDH complex, composed of a mixture of chloroplast and nucleus encoded subunits. Component of the NDH lumenal subcomplex, at least composed of PnsL1, PnsL2, PnsL3, PnsL4 and PnsL5.

It is found in the plastid. Its subcellular location is the chloroplast thylakoid lumen. It catalyses the reaction [protein]-peptidylproline (omega=180) = [protein]-peptidylproline (omega=0). NDH shuttles electrons from NAD(P)H:plastoquinone, via FMN and iron-sulfur (Fe-S) centers, to quinones in the photosynthetic chain and possibly in a chloroplast respiratory chain. The immediate electron acceptor for the enzyme in this species is believed to be plastoquinone. Couples the redox reaction to proton translocation, and thus conserves the redox energy in a proton gradient. PPIases accelerate the folding of proteins. It catalyzes the cis-trans isomerization of proline imidic peptide bonds in oligopeptides. Seems to be essential for stabilizing the NDH subcomplex A. In Arabidopsis thaliana (Mouse-ear cress), this protein is Photosynthetic NDH subunit of lumenal location 4, chloroplastic.